Here is a 228-residue protein sequence, read N- to C-terminus: Probable C4-dicarboxylate response regulator DctR (228 aa).

Residues Thr-7–Arg-123 form the Response regulatory domain. Residue Asp-58 is modified to 4-aspartylphosphate. Residues Ala-180–Glu-199 constitute a DNA-binding region (H-T-H motif).

Phosphorylated by DctS.

The protein resides in the cytoplasm. Functionally, member of the two-component regulatory system DctS/DctR. Essential for expression of DctP. This chain is Probable C4-dicarboxylate response regulator DctR (dctR), found in Priestia megaterium (Bacillus megaterium).